The following is a 366-amino-acid chain: Isocitrate dehydrogenase [NAD] subunit alpha, mitochondrial (366 aa).

The N-terminal 27 residues, 1 to 27, are a transit peptide targeting the mitochondrion; that stretch reads MAGPAWISKVSRLLGAFHNPKQVTRGF. Lysine 77 carries the N6-succinyllysine modification. Threonine 101 is modified (phosphothreonine). Arginine 115, arginine 125, and arginine 146 together coordinate substrate. N6-acetyllysine is present on lysine 223. Positions 233, 257, and 261 each coordinate Mg(2+). Lysine 343 is modified (N6-acetyllysine; alternate). N6-succinyllysine; alternate is present on lysine 343. N6-succinyllysine is present on lysine 350.

Belongs to the isocitrate and isopropylmalate dehydrogenases family. As to quaternary structure, heterooligomer of subunits alpha (IDH3A), beta (IDH3B), and gamma (IDH3G) in the apparent ratio of 2:1:1. The heterodimer containing one IDH3A and one IDH3B subunit and the heterodimer containing one IDH3A and one IDH3G subunit assemble into a heterotetramer (which contains two subunits of IDH3A, one of IDH3B and one of IDH3G) and further into the heterooctamer. Mg(2+) serves as cofactor. Requires Mn(2+) as cofactor.

Its subcellular location is the mitochondrion. It catalyses the reaction D-threo-isocitrate + NAD(+) = 2-oxoglutarate + CO2 + NADH. Its activity is regulated as follows. The heterotetramer and the heterodimer composed of IDH3A and IDH3G subunits can be allosterically activated by citrate (CIT) or/and ADP, and the two activators can act independently or synergistically. The heterodimer composed of IDH3A and IDH3B subunits cannot be allosterically regulated and the allosteric regulation of the heterotetramer is through the IDH3G subunit and not the IDH3B subunit. The IDH3G subunit contains the allosteric site which consists of a CIT-binding site and an ADP-binding site, and the binding of CIT and ADP causes conformational changes at the allosteric site which are transmitted to the active site in the catalytic subunit (IDH3A) through a cascade of conformational changes at the heterodimer interface, leading to stabilization of the isocitrate-binding at the active site and thus activation of the enzyme. ATP can activate the heterotetramer and the heterodimer composed of IDH3A and IDH3G subunits at low concentrations but inhibits their activities at high concentrations, whereas ATP exhibits only inhibitory effect on the heterodimer composed of IDH3A and IDH3B subunits. Functionally, catalytic subunit of the enzyme which catalyzes the decarboxylation of isocitrate (ICT) into alpha-ketoglutarate. The heterodimer composed of the alpha (IDH3A) and beta (IDH3B) subunits and the heterodimer composed of the alpha (IDH3A) and gamma (IDH3G) subunits, have considerable basal activity but the full activity of the heterotetramer (containing two subunits of IDH3A, one of IDH3B and one of IDH3G) requires the assembly and cooperative function of both heterodimers. This chain is Isocitrate dehydrogenase [NAD] subunit alpha, mitochondrial, found in Pongo abelii (Sumatran orangutan).